The primary structure comprises 427 residues: Glutamate-1-semialdehyde 2,1-aminomutase (427 aa).

K267 bears the N6-(pyridoxal phosphate)lysine mark.

It belongs to the class-III pyridoxal-phosphate-dependent aminotransferase family. HemL subfamily. In terms of assembly, homodimer. Requires pyridoxal 5'-phosphate as cofactor.

Its subcellular location is the cytoplasm. It catalyses the reaction (S)-4-amino-5-oxopentanoate = 5-aminolevulinate. It participates in porphyrin-containing compound metabolism; protoporphyrin-IX biosynthesis; 5-aminolevulinate from L-glutamyl-tRNA(Glu): step 2/2. The polypeptide is Glutamate-1-semialdehyde 2,1-aminomutase (Sulfurihydrogenibium azorense (strain DSM 15241 / OCM 825 / Az-Fu1)).